We begin with the raw amino-acid sequence, 552 residues long: Probable protein kinase UbiB (552 aa).

A helical transmembrane segment spans residues 22–42 (LLPANLPLAATLLLLPFKLFP). Positions 118-498 (SFNIEPLASA…QQLARQRNRR (381 aa)) constitute a Protein kinase domain. ATP is bound by residues 124–132 (LASASVAQV) and lysine 146. The Proton acceptor role is filled by aspartate 281. Helical transmembrane passes span 501 to 521 (ITLL…GEGI) and 530 to 550 (FGDI…AWLL).

It belongs to the ABC1 family. UbiB subfamily.

Its subcellular location is the cell inner membrane. It functions in the pathway cofactor biosynthesis; ubiquinone biosynthesis [regulation]. In terms of biological role, is probably a protein kinase regulator of UbiI activity which is involved in aerobic coenzyme Q (ubiquinone) biosynthesis. This is Probable protein kinase UbiB from Cellvibrio japonicus (strain Ueda107) (Pseudomonas fluorescens subsp. cellulosa).